The sequence spans 418 residues: Cell division protein FtsA (418 aa).

Belongs to the FtsA/MreB family. As to quaternary structure, self-interacts. Interacts with FtsZ.

The protein localises to the cell inner membrane. Functionally, cell division protein that is involved in the assembly of the Z ring. May serve as a membrane anchor for the Z ring. This is Cell division protein FtsA from Buchnera aphidicola subsp. Schizaphis graminum (strain Sg).